The chain runs to 780 residues: Tyrosine-protein phosphatase non-receptor type 12 (780 aa).

An N-acetylmethionine modification is found at M1. The residue at position 19 (S19) is a Phosphoserine. In terms of domain architecture, Tyrosine-protein phosphatase spans 28 to 293 (FARDFMRLRR…ELVHRAIAQL (266 aa)). Residues R36, 63–67 (RYKDI), D199, 231–237 (CSAGCGR), and Q278 each bind substrate. C231 functions as the Phosphocysteine intermediate in the catalytic mechanism. Residues S332, S435, S449, and S468 each carry the phosphoserine modification. The tract at residues 345–438 (VEGDAKEEIL…KLERNLSFEI (94 aa)) is interaction with TGFB1I1. The segment covering 502–519 (QSNKVSVTPPEESQNSDT) has biased composition (polar residues). 3 disordered regions span residues 502–639 (QSNK…STES), 657–725 (GTTH…EKCD), and 744–780 (SDKREQISENPTEATDIGFGNRCGKPKGPRDPPSEWT). T509 and T519 each carry phosphothreonine. Residues 521–533 (PRPDRLPLDEKGH) show a composition bias toward basic and acidic residues. Composition is skewed to polar residues over residues 552 to 577 (EGNSSDINYQTRKTVSLTPSPTTQVE) and 587 to 601 (TSPLFRTPLSFTNPL). S567 bears the Phosphoserine mark. At T569 the chain carries Phosphothreonine. Phosphoserine occurs at positions 571 and 596. T598 carries the phosphothreonine modification. Positions 602–613 (HSDDSDSDERNS) are enriched in basic and acidic residues. A phosphoserine mark is found at S603, S606, S608, and S613. Residues 622–639 (TNISTASATVSAATSTES) are compositionally biased toward low complexity. Phosphoserine is present on residues S673 and S689. The span at 690–703 (EHNTPVRSEWSELQ) shows a compositional bias: polar residues. T693 is modified (phosphothreonine). 2 stretches are compositionally biased toward basic and acidic residues: residues 704–725 (SQERSEQKKSEGLITSENEKCD) and 771–780 (GPRDPPSEWT).

The protein belongs to the protein-tyrosine phosphatase family. Non-receptor class 4 subfamily. In terms of assembly, interacts with TGFB1I1. Interacts with PSTPIP1. Interacts with PTK2B/PYK2. Interacts with LPXN. Interacts with SORBS2; this interaction greatly enhances WASF1 dephosphorylation and might mediate partial translocation to focal adhesion sites. In terms of processing, phosphorylated by STK24/MST3 and this results in inhibition of its activity.

The protein resides in the cytoplasm. It localises to the cell junction. Its subcellular location is the focal adhesion. It is found in the cell projection. The protein localises to the podosome. The enzyme catalyses O-phospho-L-tyrosyl-[protein] + H2O = L-tyrosyl-[protein] + phosphate. In terms of biological role, dephosphorylates a range of proteins, and thereby regulates cellular signaling cascades. Dephosphorylates cellular tyrosine kinases, such as ERBB2 and PTK2B/PYK2, and thereby regulates signaling via ERBB2 and PTK2B/PYK2. Selectively dephosphorylates ERBB2 phosphorylated at 'Tyr-1112', 'Tyr-1196', and/or 'Tyr-1248'. The sequence is that of Tyrosine-protein phosphatase non-receptor type 12 (PTPN12) from Homo sapiens (Human).